The following is a 601-amino-acid chain: Elongation factor 4 (601 aa).

The 183-residue stretch at 7-189 folds into the tr-type G domain; it reads SNIRNFSIVA…AIVHRLPPPQ (183 aa). GTP is bound by residues 19 to 24 and 136 to 139; these read DHGKST and NKVD.

Belongs to the TRAFAC class translation factor GTPase superfamily. Classic translation factor GTPase family. LepA subfamily.

Its subcellular location is the cell inner membrane. The catalysed reaction is GTP + H2O = GDP + phosphate + H(+). Its function is as follows. Required for accurate and efficient protein synthesis under certain stress conditions. May act as a fidelity factor of the translation reaction, by catalyzing a one-codon backward translocation of tRNAs on improperly translocated ribosomes. Back-translocation proceeds from a post-translocation (POST) complex to a pre-translocation (PRE) complex, thus giving elongation factor G a second chance to translocate the tRNAs correctly. Binds to ribosomes in a GTP-dependent manner. This chain is Elongation factor 4, found in Rhodopseudomonas palustris (strain BisB18).